The chain runs to 440 residues: Putative purine permease YwdJ (440 aa).

The next 13 membrane-spanning stretches (helical) occupy residues 3–23 (LVLG…VVPV), 39–59 (LIQS…LKGH), 67–87 (PAGL…TVFA), 96–116 (LQGA…FKVI), 130–150 (VYLL…ILGI), 156–176 (GVDG…FIMT), 188–208 (ILLA…AKPI), 231–251 (GLII…LASM), 283–303 (LLSG…AGFI), 314–334 (FMLG…MNTF), 341–361 (VGFA…FAEF), 374–394 (SIIG…ETAL), and 399–419 (PVFI…AIAA).

This sequence belongs to the nucleobase:cation symporter-2 (NCS2) (TC 2.A.40) family.

The protein localises to the cell membrane. In Bacillus subtilis (strain 168), this protein is Putative purine permease YwdJ (ywdJ).